A 285-amino-acid polypeptide reads, in one-letter code: ATP synthase gamma chain (285 aa).

The protein belongs to the ATPase gamma chain family. In terms of assembly, F-type ATPases have 2 components, CF(1) - the catalytic core - and CF(0) - the membrane proton channel. CF(1) has five subunits: alpha(3), beta(3), gamma(1), delta(1), epsilon(1). CF(0) has three main subunits: a, b and c.

It is found in the cell membrane. Functionally, produces ATP from ADP in the presence of a proton gradient across the membrane. The gamma chain is believed to be important in regulating ATPase activity and the flow of protons through the CF(0) complex. This is ATP synthase gamma chain from Clostridium novyi (strain NT).